Consider the following 249-residue polypeptide: 4-hydroxy-tetrahydrodipicolinate reductase (249 aa).

NAD(+) contacts are provided by residues aspartate 32, 74-76 (GTT), and 99-102 (SANF). Histidine 134 serves as the catalytic Proton donor/acceptor. Histidine 135 serves as a coordination point for (S)-2,3,4,5-tetrahydrodipicolinate. The active-site Proton donor is the lysine 138. 144-145 (GT) provides a ligand contact to (S)-2,3,4,5-tetrahydrodipicolinate.

This sequence belongs to the DapB family.

The protein resides in the cytoplasm. The catalysed reaction is (S)-2,3,4,5-tetrahydrodipicolinate + NAD(+) + H2O = (2S,4S)-4-hydroxy-2,3,4,5-tetrahydrodipicolinate + NADH + H(+). It carries out the reaction (S)-2,3,4,5-tetrahydrodipicolinate + NADP(+) + H2O = (2S,4S)-4-hydroxy-2,3,4,5-tetrahydrodipicolinate + NADPH + H(+). It participates in amino-acid biosynthesis; L-lysine biosynthesis via DAP pathway; (S)-tetrahydrodipicolinate from L-aspartate: step 4/4. Catalyzes the conversion of 4-hydroxy-tetrahydrodipicolinate (HTPA) to tetrahydrodipicolinate. The polypeptide is 4-hydroxy-tetrahydrodipicolinate reductase (Chlorobaculum parvum (strain DSM 263 / NCIMB 8327) (Chlorobium vibrioforme subsp. thiosulfatophilum)).